We begin with the raw amino-acid sequence, 312 residues long: Putative mitochondrial transporter UCP3 (312 aa).

Residues 1–10 are Mitochondrial intermembrane-facing; the sequence is MVGLKPSDVP. The helical transmembrane segment at 11 to 32 threads the bilayer; it reads PTMAVKFLGAGTAACFADLVTF. 3 Solcar repeats span residues 11–105, 114–206, and 215–300; these read PTMA…VKQV, SSLT…LKEK, and DNFP…LKRA. Residues 33-76 lie on the Mitochondrial matrix side of the membrane; it reads PLDTAKVRLQIQGENQAVQTARLVQYRGVLGTILTMVRTEGPCS. A helical transmembrane segment spans residues 77–99; sequence PYNGLVAGLQRQMSFASIRIGLY. The Mitochondrial intermembrane portion of the chain corresponds to 100-119; sequence DSVKQVYTPKGADNSSLTTR. A helical membrane pass occupies residues 120–136; the sequence is ILAGCTTGAMAVTCAQP. Residues 137–183 are Mitochondrial matrix-facing; that stretch reads TDVVKVRFQASIHLGPSRSDRKYSGTMDAYRTIAREEGVRGLWKGTL. The helical transmembrane segment at 184–200 threads the bilayer; it reads PNIMRNAIVNCAEVVTY. The Mitochondrial intermembrane portion of the chain corresponds to 201 to 217; sequence DILKEKLLDYHLLTDNF. A helical transmembrane segment spans residues 218-237; sequence PCHFVSAFGAGFCATVVASP. Residues 238 to 271 are Mitochondrial matrix-facing; it reads VDVVKTRYMNSPPGQYFSPLDCMIKMVAQEGPTA. The chain crosses the membrane as a helical span at residues 272–294; sequence FYKGFTPSFLRLGSWNVVMFVTY. Positions 279 to 301 are purine nucleotide binding; the sequence is SFLRLGSWNVVMFVTYEQLKRAL. The Mitochondrial intermembrane portion of the chain corresponds to 295–312; the sequence is EQLKRALMKVQMLRESPF.

It belongs to the mitochondrial carrier (TC 2.A.29) family. As to quaternary structure, interacts with HAX1; the interaction is direct and calcium-dependent. Only in skeletal muscle and heart. Also expressed in white and brown adipose tissues. Is more expressed in glycolytic than in oxidative skeletal muscles.

It is found in the mitochondrion inner membrane. Its activity is regulated as follows. The proton transporter activity is activated by fatty acids (in vitro). The proton transporter activity is inhibited by ATP and ADP (in vitro). The effect of Ubiquinone/coenzyme Q10 on the proton transporter activity in reconstituted membranes is unclear (in vitro). In terms of biological role, putative transmembrane transporter that plays a role in mitochondrial metabolism via an as yet unclear mechanism. Originally, this mitochondrial protein was thought to act as a proton transmembrane transporter from the mitochondrial intermembrane space into the matrix, causing proton leaks through the inner mitochondrial membrane, thereby uncoupling mitochondrial membrane potential generation from ATP synthesis. However, this function is controversial and uncoupling may not be the function, or at least not the main function, but rather a consequence of more conventional metabolite transporter activity. In Homo sapiens (Human), this protein is Putative mitochondrial transporter UCP3.